The chain runs to 309 residues: Ras-like protein 1 (309 aa).

GTP contacts are provided by residues 20–25 (GVGKSA), 36–42 (VDEYDPT), 66–67 (AG), 123–126 (NKLD), and 153–155 (SAK). An Effector region motif is present at residues 39–47 (YDPTIEDSY). Residues 177–303 (KYNSMNRQLD…SANARKESSG (127 aa)) are disordered. Composition is skewed to polar residues over residues 179 to 188 (NSMNRQLDNT) and 209 to 235 (NGSY…NHNG). A compositionally biased stretch (basic and acidic residues) spans 236-245 (ETTKRTDEKN). Over residues 246–256 (YVNQNNNNEGN) the composition is skewed to low complexity. A compositionally biased stretch (polar residues) spans 257–296 (TKYSSNGNGNRSDISRGNQNNALNSRSKQSAEPQKNSSAN). C305 is lipidated: S-palmitoyl cysteine. C306 is modified (cysteine methyl ester). C306 is lipidated: S-farnesyl cysteine. A propeptide spans 307–309 (IIC) (removed in mature form).

The protein belongs to the small GTPase superfamily. Ras family. Farnesylated by RAM1-RAM2, which is required for targeting RAS1 to the cytoplasmic site of the endoplasmic reticulum, where proteolytic processing of the C-terminus by RCE1 and methylation of the resulting carboxyl group by STE14 occurs. In terms of processing, palmitoylated by the ERF2-SHR5 complex, which is required for proper plasma membrane localization of RAS1.

It localises to the cell membrane. It carries out the reaction GTP + H2O = GDP + phosphate + H(+). Its activity is regulated as follows. Alternates between an inactive form bound to GDP and an active form bound to GTP. Activated by guanine nucleotide-exchange factor (GEF) CDC25 and inactivated by GTPase-activating proteins (GAPs) IRA1 and IRA2. The S.cerevisiae Ras proteins modulate the activity of the adenylate cyclase catalytic subunit and therefore affect the biosynthesis of cyclic-AMP. The polypeptide is Ras-like protein 1 (RAS1) (Saccharomyces cerevisiae (strain ATCC 204508 / S288c) (Baker's yeast)).